The sequence spans 327 residues: Complex I intermediate-associated protein 30, mitochondrial (327 aa).

The N-terminal 24 residues, 1-24, are a transit peptide targeting the mitochondrion; the sequence is MALVHKLLRGTYFLRKFXKPTSAL. The segment at 42–63 is disordered; the sequence is PVASPGKASSQRKTEGDLQGDH. The span at 53–63 shows a compositional bias: basic and acidic residues; it reads RKTEGDLQGDH. At serine 318 the chain carries Phosphoserine.

This sequence belongs to the CIA30 family. In terms of assembly, part of the mitochondrial complex I assembly/MCIA complex that comprises at least the core subunits TMEM126B, NDUFAF1, ECSIT and ACAD9 and complement subunits such as COA1 and TMEM186. Interacts with ECSIT. Interacts with ACAD9. At early stages of complex I assembly, it is found in intermediate subcomplexes that contain different subunits including NDUFB6, NDUFA6, NDUFA9, NDUFS3, NDUFS7, ND1, ND2 and ND3. Interacts with TMEM70 and TMEM242.

The protein localises to the mitochondrion. The protein resides in the mitochondrion matrix. Its function is as follows. As part of the MCIA complex, involved in the assembly of the mitochondrial complex I. The protein is Complex I intermediate-associated protein 30, mitochondrial of Pan troglodytes (Chimpanzee).